A 394-amino-acid chain; its full sequence is NAD(P)H-quinone oxidoreductase subunit H (394 aa).

The protein belongs to the complex I 49 kDa subunit family. In terms of assembly, NDH-1 can be composed of about 15 different subunits; different subcomplexes with different compositions have been identified which probably have different functions.

The protein resides in the cellular thylakoid membrane. The catalysed reaction is a plastoquinone + NADH + (n+1) H(+)(in) = a plastoquinol + NAD(+) + n H(+)(out). It catalyses the reaction a plastoquinone + NADPH + (n+1) H(+)(in) = a plastoquinol + NADP(+) + n H(+)(out). In terms of biological role, NDH-1 shuttles electrons from an unknown electron donor, via FMN and iron-sulfur (Fe-S) centers, to quinones in the respiratory and/or the photosynthetic chain. The immediate electron acceptor for the enzyme in this species is believed to be plastoquinone. Couples the redox reaction to proton translocation, and thus conserves the redox energy in a proton gradient. Cyanobacterial NDH-1 also plays a role in inorganic carbon-concentration. The sequence is that of NAD(P)H-quinone oxidoreductase subunit H from Microcystis aeruginosa (strain NIES-843 / IAM M-2473).